Here is a 304-residue protein sequence, read N- to C-terminus: QYHTLPEIYSWLDRLVQEHPEHVEPVVGGKSYEGREIRGVKVSYKKGNPVVMVESNIHAREWITAATTTYLLNELLTSKNSTIREMAENYDWYIFPVTNPDGYVYTHTTDRMWRKTRSPNPDSLCAGTDPNRNWNFHWMEQGTSSRPCTETYGGKKAFSEVETRSFSDFLKTLKGQIKVYLAFHSYSQLLLFPYGHTCQHTYNHDDLQAIGDAAARSLAQRYGTDYTVGNIYDAIYPASGGSMDWAYDTLDIPIAYTYELRPRDGWNGFQLPANQIIPTGEETVDSVVTILKESRRLGYFNTSD.

The Peptidase M14 domain occupies 1 to 294; the sequence is QYHTLPEIYS…DSVVTILKES (294 aa). Residues H58 and E61 each contribute to the Zn(2+) site. C125 and C148 form a disulfide bridge. Zn(2+) is bound at residue H184. E259 functions as the Proton donor/acceptor in the catalytic mechanism.

Belongs to the peptidase M14 family. Zn(2+) is required as a cofactor. As to expression, gut specific.

Its subcellular location is the secreted. Functionally, involved in the digestion of the blood meal. In Simulium vittatum (Striped black fly), this protein is Zinc carboxypeptidase.